The following is a 158-amino-acid chain: Small ribosomal subunit protein uS7 (158 aa).

Belongs to the universal ribosomal protein uS7 family. Part of the 30S ribosomal subunit. Contacts proteins S9 and S11.

Functionally, one of the primary rRNA binding proteins, it binds directly to 16S rRNA where it nucleates assembly of the head domain of the 30S subunit. Is located at the subunit interface close to the decoding center, probably blocks exit of the E-site tRNA. This chain is Small ribosomal subunit protein uS7, found in Flavobacterium johnsoniae (strain ATCC 17061 / DSM 2064 / JCM 8514 / BCRC 14874 / CCUG 350202 / NBRC 14942 / NCIMB 11054 / UW101) (Cytophaga johnsonae).